Here is a 51-residue protein sequence, read N- to C-terminus: Large ribosomal subunit protein bL33 (51 aa).

Positions 1–23 (MRDKIKLESSAGTGHFYTTTKNK) are disordered. The segment covering 10–20 (SAGTGHFYTTT) has biased composition (polar residues).

Belongs to the bacterial ribosomal protein bL33 family.

This Chromobacterium violaceum (strain ATCC 12472 / DSM 30191 / JCM 1249 / CCUG 213 / NBRC 12614 / NCIMB 9131 / NCTC 9757 / MK) protein is Large ribosomal subunit protein bL33.